Here is a 168-residue protein sequence, read N- to C-terminus: Ribosome maturation factor RimP (168 aa).

This sequence belongs to the RimP family.

The protein localises to the cytoplasm. Its function is as follows. Required for maturation of 30S ribosomal subunits. In Mycoplasma mobile (strain ATCC 43663 / 163K / NCTC 11711) (Mesomycoplasma mobile), this protein is Ribosome maturation factor RimP.